The chain runs to 431 residues: Enolase (431 aa).

Gln166 provides a ligand contact to (2R)-2-phosphoglycerate. The active-site Proton donor is the Glu208. The Mg(2+) site is built by Asp245, Glu288, and Asp315. (2R)-2-phosphoglycerate is bound by residues Lys340, Arg369, Ser370, and Lys391. The active-site Proton acceptor is the Lys340.

This sequence belongs to the enolase family. It depends on Mg(2+) as a cofactor.

The protein resides in the cytoplasm. It is found in the secreted. Its subcellular location is the cell surface. It catalyses the reaction (2R)-2-phosphoglycerate = phosphoenolpyruvate + H2O. It functions in the pathway carbohydrate degradation; glycolysis; pyruvate from D-glyceraldehyde 3-phosphate: step 4/5. Its function is as follows. Catalyzes the reversible conversion of 2-phosphoglycerate (2-PG) into phosphoenolpyruvate (PEP). It is essential for the degradation of carbohydrates via glycolysis. The chain is Enolase from Clostridium botulinum (strain Eklund 17B / Type B).